Reading from the N-terminus, the 199-residue chain is Chaperone protein TorD (199 aa).

The protein belongs to the TorD/DmsD family. TorD subfamily.

It is found in the cytoplasm. Involved in the biogenesis of TorA. Acts on TorA before the insertion of the molybdenum cofactor and, as a result, probably favors a conformation of the apoenzyme that is competent for acquiring the cofactor. The protein is Chaperone protein TorD of Escherichia coli O127:H6 (strain E2348/69 / EPEC).